The sequence spans 336 residues: Inactive serine/threonine-protein kinase BKN2 (336 aa).

The disordered stretch occupies residues 1–25 (MGNCLKPLKEQPPSASPKPLTIPSS). A lipid anchor (N-myristoyl glycine) is attached at G2. C4 carries S-palmitoyl cysteine lipidation. The Protein kinase domain maps to 52–332 (YMVIKGNDNG…QVFDGLNDIA (281 aa)).

Belongs to the protein kinase superfamily. Ser/Thr protein kinase family. As to quaternary structure, component of an immune signaling complex made of, at least, SZE1, BKN2/SZE2, ZAR1 and ZED1. Interacts directly with ZAR1 and Pseudomonas syringae HOPZ1A at the plasma membrane. N-terminal myristoylation is critical for plasma membrane localization and implication in defense responses. As to expression, expressed in stigma and ovaries in flowers, and in stems and seedlings.

It localises to the cell membrane. In terms of biological role, together with SZE1 and ZED1, required for effector-triggered immunity (e.g. Pseudomonas syringae type III effector HopZ1a) via the activation of ZAR1, thus being essential for resistance against P. syringae pv. tomato DC3000 expressing HopZ1a. Collaboratively with BKN1, involved in compatible pollen-stigma interactions. The chain is Inactive serine/threonine-protein kinase BKN2 from Arabidopsis thaliana (Mouse-ear cress).